The following is a 156-amino-acid chain: Envelope glycoprotein L (156 aa).

The signal sequence occupies residues 1–16 (MSPLVAVLVFFSAALG). In terms of domain architecture, gL alphaherpesvirus-type spans 50 to 156 (ELEWDDEDHP…LRYNGGPPAE (107 aa)). Cys-71 and Cys-95 form a disulfide bridge.

It belongs to the herpesviridae glycoprotein L (gL) family. Alphaherpesvirinae gL subfamily. As to quaternary structure, interacts with glycoprotein H (gH); this interaction is necessary for the correct processing and cell surface expression of gH. The heterodimer gH/gL seems to interact with gB trimers during fusion. In terms of processing, O-glycosylated, and sialylated.

The protein localises to the virion membrane. It is found in the host cell membrane. Its subcellular location is the host Golgi apparatus. The protein resides in the host trans-Golgi network. Functionally, the heterodimer glycoprotein H-glycoprotein L is required for the fusion of viral and plasma membranes leading to virus entry into the host cell. Acts as a functional inhibitor of gH and maintains gH in an inhibited form. Upon binding to host integrins, gL dissociates from gH leading to activation of the viral fusion glycoproteins gB and gH. In Suid herpesvirus 1 (strain Indiana-Funkhauser / Becker) (SuHV-1), this protein is Envelope glycoprotein L.